The chain runs to 237 residues: Cysteine-rich venom protein DIS1 (237 aa).

A signal peptide spans 1 to 18 (MFVFILLSLAAVLQQSFG). The region spanning 37-165 (VDKHNAFRRS…SYNYFYVCQY (129 aa)) is the SCP domain. Disulfide bonds link cysteine 74–cysteine 152, cysteine 91–cysteine 166, cysteine 147–cysteine 163, cysteine 185–cysteine 192, cysteine 188–cysteine 197, cysteine 201–cysteine 234, and cysteine 219–cysteine 232. The ShKT domain maps to 201-234 (CSREDVFMNCKSLVAQSNCQDDYIRKNCPATCFC).

It belongs to the CRISP family. In terms of tissue distribution, expressed by the venom gland.

Its subcellular location is the secreted. Functionally, weakly blocks contraction of smooth muscle elicited by high potassium-induced depolarization, but does not block caffeine-stimulated contraction. May target voltage-gated calcium channels on smooth muscle. This chain is Cysteine-rich venom protein DIS1, found in Dispholidus typus (Boomslang).